The following is a 504-amino-acid chain: SPbeta prophage-derived uncharacterized protein YorI (504 aa).

The protein is SPbeta prophage-derived uncharacterized protein YorI (yorI) of Bacillus subtilis (strain 168).